Reading from the N-terminus, the 165-residue chain is Phosphopantetheine adenylyltransferase (165 aa).

Thr-9 serves as a coordination point for substrate. Residues 9–10 (TF) and His-17 contribute to the ATP site. The substrate site is built by Lys-41, Leu-73, and Arg-87. ATP contacts are provided by residues 88–90 (GLR), Glu-98, and 123–129 (YQFISGT).

This sequence belongs to the bacterial CoaD family. In terms of assembly, homohexamer. Mg(2+) serves as cofactor.

The protein localises to the cytoplasm. The enzyme catalyses (R)-4'-phosphopantetheine + ATP + H(+) = 3'-dephospho-CoA + diphosphate. The protein operates within cofactor biosynthesis; coenzyme A biosynthesis; CoA from (R)-pantothenate: step 4/5. Its function is as follows. Reversibly transfers an adenylyl group from ATP to 4'-phosphopantetheine, yielding dephospho-CoA (dPCoA) and pyrophosphate. This Burkholderia lata (strain ATCC 17760 / DSM 23089 / LMG 22485 / NCIMB 9086 / R18194 / 383) protein is Phosphopantetheine adenylyltransferase.